The sequence spans 113 residues: Large ribosomal subunit protein uL24 (113 aa).

This sequence belongs to the universal ribosomal protein uL24 family. Part of the 50S ribosomal subunit.

Functionally, one of two assembly initiator proteins, it binds directly to the 5'-end of the 23S rRNA, where it nucleates assembly of the 50S subunit. One of the proteins that surrounds the polypeptide exit tunnel on the outside of the subunit. This Synechococcus elongatus (strain ATCC 33912 / PCC 7942 / FACHB-805) (Anacystis nidulans R2) protein is Large ribosomal subunit protein uL24.